We begin with the raw amino-acid sequence, 597 residues long: Aspartate--tRNA(Asp/Asn) ligase (597 aa).

Glu175 serves as a coordination point for L-aspartate. Residues Gln199–Lys202 form an aspartate region. Residues Arg221 and His456 each contribute to the L-aspartate site. Arg221–Glu223 serves as a coordination point for ATP. Position 490 (Glu490) interacts with ATP. Arg497 contacts L-aspartate. Gly542–Arg545 lines the ATP pocket.

It belongs to the class-II aminoacyl-tRNA synthetase family. Type 1 subfamily. Homodimer.

The protein localises to the cytoplasm. The enzyme catalyses tRNA(Asx) + L-aspartate + ATP = L-aspartyl-tRNA(Asx) + AMP + diphosphate. Its function is as follows. Aspartyl-tRNA synthetase with relaxed tRNA specificity since it is able to aspartylate not only its cognate tRNA(Asp) but also tRNA(Asn). Reaction proceeds in two steps: L-aspartate is first activated by ATP to form Asp-AMP and then transferred to the acceptor end of tRNA(Asp/Asn). This Beijerinckia indica subsp. indica (strain ATCC 9039 / DSM 1715 / NCIMB 8712) protein is Aspartate--tRNA(Asp/Asn) ligase.